A 697-amino-acid polypeptide reads, in one-letter code: Elongation factor G 2 (697 aa).

The tr-type G domain maps to 5–280 (SKYRNIGIFA…AVVDYLPAPD (276 aa)). GTP contacts are provided by residues 14–21 (AHVDAGKT), 78–82 (DTPGH), and 132–135 (NKLD).

This sequence belongs to the TRAFAC class translation factor GTPase superfamily. Classic translation factor GTPase family. EF-G/EF-2 subfamily.

The protein resides in the cytoplasm. Functionally, catalyzes the GTP-dependent ribosomal translocation step during translation elongation. During this step, the ribosome changes from the pre-translocational (PRE) to the post-translocational (POST) state as the newly formed A-site-bound peptidyl-tRNA and P-site-bound deacylated tRNA move to the P and E sites, respectively. Catalyzes the coordinated movement of the two tRNA molecules, the mRNA and conformational changes in the ribosome. This is Elongation factor G 2 from Shewanella denitrificans (strain OS217 / ATCC BAA-1090 / DSM 15013).